Here is a 156-residue protein sequence, read N- to C-terminus: Small ribosomal subunit protein uS7 (156 aa).

It belongs to the universal ribosomal protein uS7 family. As to quaternary structure, part of the 30S ribosomal subunit. Contacts proteins S9 and S11.

In terms of biological role, one of the primary rRNA binding proteins, it binds directly to 16S rRNA where it nucleates assembly of the head domain of the 30S subunit. Is located at the subunit interface close to the decoding center, probably blocks exit of the E-site tRNA. This Rhodopseudomonas palustris (strain BisB18) protein is Small ribosomal subunit protein uS7.